A 490-amino-acid polypeptide reads, in one-letter code: Cobyric acid synthase (490 aa).

Residues 252–428 (ARRVAVVRLP…WHGAFEGDAL (177 aa)) enclose the GATase cobBQ-type domain. Cys333 serves as the catalytic Nucleophile. Residue His420 is part of the active site.

Belongs to the CobB/CobQ family. CobQ subfamily.

It functions in the pathway cofactor biosynthesis; adenosylcobalamin biosynthesis. Catalyzes amidations at positions B, D, E, and G on adenosylcobyrinic A,C-diamide. NH(2) groups are provided by glutamine, and one molecule of ATP is hydrogenolyzed for each amidation. This Mycolicibacterium vanbaalenii (strain DSM 7251 / JCM 13017 / BCRC 16820 / KCTC 9966 / NRRL B-24157 / PYR-1) (Mycobacterium vanbaalenii) protein is Cobyric acid synthase.